An 803-amino-acid chain; its full sequence is Isoamylase 1, chloroplastic (803 aa).

A chloroplast-targeting transit peptide spans 1-54; it reads MASLPHCLSARPLVVAAAPGRPGPGPGPWLRGGARRRNAAFSAGNAGRRVGLRR. The Nucleophile role is filled by Asp432. Catalysis depends on Glu488, which acts as the Proton donor.

This sequence belongs to the glycosyl hydrolase 13 family. As to quaternary structure, forms a homo-pentamer and a hetero-hexamer composed of five ISA1 and one ISA2. Interacts with FLO6/SIP4. As to expression, highly expressed in developing endosperm. Expressed at low levels in leaves.

The protein localises to the plastid. It is found in the chloroplast. It catalyses the reaction Hydrolysis of (1-&gt;6)-alpha-D-glucosidic branch linkages in glycogen, amylopectin and their beta-limit dextrins.. It functions in the pathway glycan biosynthesis; starch biosynthesis. Its activity is regulated as follows. Inhibited by copper chloride, mercury chloride, ammonium molybdate and para-chloromercuribenzoate. Starch-debranching enzyme involved in amylopectin biosynthesis in endosperm. Functions by removing excess branches or improper branches that interfere with the formation of double helices of the cluster chains of amylopectin and crystallization of starch. Works as ISA1 homooligomer or together with ISA2 as heterooligomer. The heterooligomer ISA1 and ISA2 possesses higher affinity than the ISA1 homooligomer for various branched polyglucans in vitro, but no marked differences exist in chain preferences for debranching of amylopectin and phytoglycogen between these forms. The sequence is that of Isoamylase 1, chloroplastic from Oryza sativa subsp. japonica (Rice).